The primary structure comprises 379 residues: MTVAVIIVAAGRGTRAGEGLPKQWRDLAGRPVLAQTVAAFAGLGRILVVLHPDDMGLGMDLLGGSVVLVAGGSTRSESVKNALEALEGSDVTRVLIHDGARPLVPASVTAAVLAALETTPGAAPALAVTDALWRGEAGLVAGTQDREGLYRAQTPQGFRFPEILAAHRAHPGGAADDVEVARHAGLSVAIVPGHEDNLKITYAPDFARAEAILRERKGLTMDVRLGNGYDVHAFCEGDHVVLCGVKVPHVKALLGHSDADVGMHALTDAIYGALAEGDIGRHFPPSDPQWKGAASWIFLDHAAKLAKSRGFRIGNADVTLICERPKVGPHAVAMAAELARIMEIEPSRVSVKATTSERLGFTGREEGIASIATVTLIGA.

Residues 1–223 form a 2-C-methyl-D-erythritol 4-phosphate cytidylyltransferase region; that stretch reads MTVAVIIVAA…RERKGLTMDV (223 aa). Residues 224 to 379 are 2-C-methyl-D-erythritol 2,4-cyclodiphosphate synthase; sequence RLGNGYDVHA…SIATVTLIGA (156 aa). A divalent metal cation-binding residues include aspartate 230 and histidine 232. 4-CDP-2-C-methyl-D-erythritol 2-phosphate is bound by residues 230 to 232 and 256 to 257; these read DVH and HS. Residue histidine 264 coordinates a divalent metal cation. Residues 278–280, 354–357, phenylalanine 361, and arginine 364 contribute to the 4-CDP-2-C-methyl-D-erythritol 2-phosphate site; these read DIG and TTSE.

The protein in the N-terminal section; belongs to the IspD/TarI cytidylyltransferase family. IspD subfamily. This sequence in the C-terminal section; belongs to the IspF family. Requires a divalent metal cation as cofactor.

It catalyses the reaction 2-C-methyl-D-erythritol 4-phosphate + CTP + H(+) = 4-CDP-2-C-methyl-D-erythritol + diphosphate. The enzyme catalyses 4-CDP-2-C-methyl-D-erythritol 2-phosphate = 2-C-methyl-D-erythritol 2,4-cyclic diphosphate + CMP. It participates in isoprenoid biosynthesis; isopentenyl diphosphate biosynthesis via DXP pathway; isopentenyl diphosphate from 1-deoxy-D-xylulose 5-phosphate: step 2/6. Its pathway is isoprenoid biosynthesis; isopentenyl diphosphate biosynthesis via DXP pathway; isopentenyl diphosphate from 1-deoxy-D-xylulose 5-phosphate: step 4/6. Bifunctional enzyme that catalyzes the formation of 4-diphosphocytidyl-2-C-methyl-D-erythritol from CTP and 2-C-methyl-D-erythritol 4-phosphate (MEP) (IspD), and catalyzes the conversion of 4-diphosphocytidyl-2-C-methyl-D-erythritol 2-phosphate (CDP-ME2P) to 2-C-methyl-D-erythritol 2,4-cyclodiphosphate (ME-CPP) with a corresponding release of cytidine 5-monophosphate (CMP) (IspF). This chain is Bifunctional enzyme IspD/IspF, found in Rhodobacter capsulatus (strain ATCC BAA-309 / NBRC 16581 / SB1003).